The sequence spans 436 residues: Ribosome biogenesis protein WDR12 homolog (436 aa).

The ubiquitin-like (UBL) domain stretch occupies residues 13–97 (VRVRFLTKLP…ERVLELEYVK (85 aa)). WD repeat units follow at residues 109–147 (PHDD…THIL), 149–193 (GHSD…SVPK), 203–242 (GHTS…EDGD), 273–311 (GHTQ…ETWN), 313–353 (VSGK…TLAP), 359–399 (SHKS…PLAS), and 402–436 (SHKD…IEIV). The disordered stretch occupies residues 240-262 (DGDTVSVKKRRTNSDSSGPEESL).

Belongs to the WD repeat WDR12/YTM1 family.

The protein resides in the nucleus. Its subcellular location is the nucleolus. It is found in the nucleoplasm. Functionally, required for maturation of ribosomal RNAs and formation of the large ribosomal subunit. The polypeptide is Ribosome biogenesis protein WDR12 homolog (Oryza sativa subsp. japonica (Rice)).